A 259-amino-acid chain; its full sequence is Deoxyribose-phosphate aldolase (259 aa).

The Proton donor/acceptor role is filled by Asp-102. Lys-167 serves as the catalytic Schiff-base intermediate with acetaldehyde. The active-site Proton donor/acceptor is Lys-201.

The protein belongs to the DeoC/FbaB aldolase family. DeoC type 2 subfamily.

The protein resides in the cytoplasm. The catalysed reaction is 2-deoxy-D-ribose 5-phosphate = D-glyceraldehyde 3-phosphate + acetaldehyde. The protein operates within carbohydrate degradation; 2-deoxy-D-ribose 1-phosphate degradation; D-glyceraldehyde 3-phosphate and acetaldehyde from 2-deoxy-alpha-D-ribose 1-phosphate: step 2/2. Its function is as follows. Catalyzes a reversible aldol reaction between acetaldehyde and D-glyceraldehyde 3-phosphate to generate 2-deoxy-D-ribose 5-phosphate. This is Deoxyribose-phosphate aldolase from Escherichia coli O1:K1 / APEC.